The chain runs to 419 residues: UDP-N-acetylglucosamine 1-carboxyvinyltransferase (419 aa).

A phosphoenolpyruvate-binding site is contributed by 22 to 23; that stretch reads KN. R93 is a binding site for UDP-N-acetyl-alpha-D-glucosamine. Catalysis depends on C117, which acts as the Proton donor. C117 bears the 2-(S-cysteinyl)pyruvic acid O-phosphothioketal mark. Residues 122 to 126, D305, and I327 each bind UDP-N-acetyl-alpha-D-glucosamine; that span reads RPVDQ.

Belongs to the EPSP synthase family. MurA subfamily.

Its subcellular location is the cytoplasm. It catalyses the reaction phosphoenolpyruvate + UDP-N-acetyl-alpha-D-glucosamine = UDP-N-acetyl-3-O-(1-carboxyvinyl)-alpha-D-glucosamine + phosphate. It participates in cell wall biogenesis; peptidoglycan biosynthesis. Cell wall formation. Adds enolpyruvyl to UDP-N-acetylglucosamine. The polypeptide is UDP-N-acetylglucosamine 1-carboxyvinyltransferase (Dichelobacter nodosus (strain VCS1703A)).